The sequence spans 437 residues: Probable E3 ubiquitin-protein ligase TRIML2 (437 aa).

The B box-type zinc-finger motif lies at 14 to 55 (TEDAYCETHLEPTRLFCDVDQITLCSKCFQSQEHKHHMVCGI). The Zn(2+) site is built by C19, H22, C41, and H47. Positions 55-200 (IQEAAENYRK…IVELEKKCGE (146 aa)) form a coiled coil. The 199-residue stretch at 231-429 (DLSLCHIRGL…DSLTILQHGP (199 aa)) folds into the B30.2/SPRY domain.

The catalysed reaction is S-ubiquitinyl-[E2 ubiquitin-conjugating enzyme]-L-cysteine + [acceptor protein]-L-lysine = [E2 ubiquitin-conjugating enzyme]-L-cysteine + N(6)-ubiquitinyl-[acceptor protein]-L-lysine.. It functions in the pathway protein modification; protein ubiquitination. The chain is Probable E3 ubiquitin-protein ligase TRIML2 from Homo sapiens (Human).